Reading from the N-terminus, the 435-residue chain is GTPase Der (435 aa).

EngA-type G domains lie at 2–167 and 178–351; these read ATVV…RESG and PKIA…ESYC. Residues 8–15, 55–59, 118–121, 184–191, 231–235, and 297–300 each bind GTP; these read GRANVGKS, DTCGV, NKSE, GKPNVGKS, DTAGM, and NKFD. In terms of domain architecture, KH-like spans 352–435; sequence RKVPQQLLSK…PLVIEFKSRR (84 aa).

Belongs to the TRAFAC class TrmE-Era-EngA-EngB-Septin-like GTPase superfamily. EngA (Der) GTPase family. Associates with the 50S ribosomal subunit.

GTPase that plays an essential role in the late steps of ribosome biogenesis. The sequence is that of GTPase Der from Pseudothermotoga lettingae (strain ATCC BAA-301 / DSM 14385 / NBRC 107922 / TMO) (Thermotoga lettingae).